A 283-amino-acid chain; its full sequence is Elongation factor Ts (283 aa).

Residues 80–83 are involved in Mg(2+) ion dislocation from EF-Tu; sequence TDFV.

This sequence belongs to the EF-Ts family.

The protein resides in the cytoplasm. In terms of biological role, associates with the EF-Tu.GDP complex and induces the exchange of GDP to GTP. It remains bound to the aminoacyl-tRNA.EF-Tu.GTP complex up to the GTP hydrolysis stage on the ribosome. This is Elongation factor Ts from Erwinia tasmaniensis (strain DSM 17950 / CFBP 7177 / CIP 109463 / NCPPB 4357 / Et1/99).